The chain runs to 165 residues: 16S rRNA aminocarboxypropyltransferase (165 aa).

Positions 17, 62, 83, and 102 each coordinate S-adenosyl-L-methionine.

Belongs to the TDD superfamily. TSR3 family.

The protein resides in the cytoplasm. It catalyses the reaction an N(1)-methylpseudouridine in rRNA + S-adenosyl-L-methionine = N(1)-methyl-N(3)-[(3S)-3-amino-3-carboxypropyl]pseudouridine in rRNA + S-methyl-5'-thioadenosine + H(+). Functionally, aminocarboxypropyltransferase that catalyzes the aminocarboxypropyl transfer on pseudouridine corresponding to position 914 in M.jannaschii 16S rRNA. It constitutes the last step in biosynthesis of the hypermodified N1-methyl-N3-(3-amino-3-carboxypropyl) pseudouridine (m1acp3-Psi). The polypeptide is 16S rRNA aminocarboxypropyltransferase (Halobacterium salinarum (strain ATCC 700922 / JCM 11081 / NRC-1) (Halobacterium halobium)).